An 882-amino-acid chain; its full sequence is DNA mismatch repair protein MutS (882 aa).

627-634 (GPNMAGKS) provides a ligand contact to ATP.

Belongs to the DNA mismatch repair MutS family.

Its function is as follows. This protein is involved in the repair of mismatches in DNA. It is possible that it carries out the mismatch recognition step. This protein has a weak ATPase activity. This is DNA mismatch repair protein MutS from Anaeromyxobacter dehalogenans (strain 2CP-C).